The sequence spans 526 residues: 2-isopropylmalate synthase (526 aa).

The region spanning 5-267 (VIIFDTTLRD…HTGIRHQEIY (263 aa)) is the Pyruvate carboxyltransferase domain. Mn(2+) contacts are provided by Asp14, His202, His204, and Asn238. Residues 393–526 (RLEYFSVQSG…VPSISTSSTH (134 aa)) form a regulatory domain region.

Belongs to the alpha-IPM synthase/homocitrate synthase family. LeuA type 1 subfamily. As to quaternary structure, homodimer. Mn(2+) is required as a cofactor.

Its subcellular location is the cytoplasm. It catalyses the reaction 3-methyl-2-oxobutanoate + acetyl-CoA + H2O = (2S)-2-isopropylmalate + CoA + H(+). It participates in amino-acid biosynthesis; L-leucine biosynthesis; L-leucine from 3-methyl-2-oxobutanoate: step 1/4. In terms of biological role, catalyzes the condensation of the acetyl group of acetyl-CoA with 3-methyl-2-oxobutanoate (2-ketoisovalerate) to form 3-carboxy-3-hydroxy-4-methylpentanoate (2-isopropylmalate). This Edwardsiella ictaluri (strain 93-146) protein is 2-isopropylmalate synthase.